Here is a 562-residue protein sequence, read N- to C-terminus: MSDNNRSRHITEGVARAPNRAMYYALGYTEADFQNPMIGVANGHSTITPCNSGLQRLADAAIEAIRVSRANPQVFGTPTISDGMSMGTEGMKYSLVSREVIADCIETAAQGQWMDGVVVIGGCDKNMPGGMMALARMNVPGIYVYGGTIKPGHYKGKDLTIVSVFEAVGEYTMGRMDETDFKAIEQCAIPGSGSYGGMYTANTMSSAFEAMGMSLPYSSTMANEDQEKVASAAESARVLVEAVRRQLRPRDIITLASIENAVAVIMATGGSTNAVLHFLAIAHAAEVPWNIDDFERIRKRVPVICDLKPSGRYVATDLHRAGGIPQVMKILLNAGLLHGDCITITGKTVAETLANVPDAPPPGQDVIMPIERALYPQGHLAILKGNLSPEGCVAKITGLKNPVITGPARVFDSEDDAMAAIMDRRIRDGDVVVIRYEGPKGGPGMREMLAPTSALVGQGLGETVGLITDGRFSGGTWGMVVGHVAPEEFVGGPIALIREGDSVTIDAHQLLLLLLNISDEEMAARRKAWAQPKPRYVRGVLAKFGKLACTASRGAVTDAFEE.

A [2Fe-2S] cluster-binding site is contributed by cysteine 50. Mg(2+) is bound at residue aspartate 82. Cysteine 123 lines the [2Fe-2S] cluster pocket. Residues aspartate 124, lysine 125, and glutamate 447 each coordinate Mg(2+). Lysine 125 is subject to N6-carboxylysine. Serine 473 functions as the Proton acceptor in the catalytic mechanism.

It belongs to the IlvD/Edd family. Homodimer. [2Fe-2S] cluster serves as cofactor. The cofactor is Mg(2+).

The catalysed reaction is (2R)-2,3-dihydroxy-3-methylbutanoate = 3-methyl-2-oxobutanoate + H2O. The enzyme catalyses (2R,3R)-2,3-dihydroxy-3-methylpentanoate = (S)-3-methyl-2-oxopentanoate + H2O. It functions in the pathway amino-acid biosynthesis; L-isoleucine biosynthesis; L-isoleucine from 2-oxobutanoate: step 3/4. The protein operates within amino-acid biosynthesis; L-valine biosynthesis; L-valine from pyruvate: step 3/4. Functionally, functions in the biosynthesis of branched-chain amino acids. Catalyzes the dehydration of (2R,3R)-2,3-dihydroxy-3-methylpentanoate (2,3-dihydroxy-3-methylvalerate) into 2-oxo-3-methylpentanoate (2-oxo-3-methylvalerate) and of (2R)-2,3-dihydroxy-3-methylbutanoate (2,3-dihydroxyisovalerate) into 2-oxo-3-methylbutanoate (2-oxoisovalerate), the penultimate precursor to L-isoleucine and L-valine, respectively. The chain is Dihydroxy-acid dehydratase 2 from Bordetella pertussis (strain Tohama I / ATCC BAA-589 / NCTC 13251).